The following is a 129-amino-acid chain: M-zodatoxin-Lt8d (129 aa).

The signal sequence occupies residues 1 to 20; it reads MKYFVVALALVAAFACIAES. Residues 21–60 constitute a propeptide that is removed on maturation; sequence KPAESEHELAEVEEENELADLEDAVWLEHLADLSDLEEAR. Positions 57-60 match the Processing quadruplet motif motif; that stretch reads EEAR.

Post-translationally, cleavage of the propeptide depends on the processing quadruplet motif (XXXR, with at least one of X being E). In terms of tissue distribution, expressed by the venom gland.

It is found in the secreted. Insecticidal, cytolytic and antimicrobial peptide. Forms voltage-dependent, ion-permeable channels in membranes. At high concentration causes cell membrane lysis. In Lachesana tarabaevi (Spider), this protein is M-zodatoxin-Lt8d (cit 1-4).